A 166-amino-acid polypeptide reads, in one-letter code: 3-isopropylmalate dehydratase small subunit 1 (166 aa).

This sequence belongs to the LeuD family. LeuD type 2 subfamily. In terms of assembly, heterodimer of LeuC and LeuD.

The catalysed reaction is (2R,3S)-3-isopropylmalate = (2S)-2-isopropylmalate. The protein operates within amino-acid biosynthesis; L-leucine biosynthesis; L-leucine from 3-methyl-2-oxobutanoate: step 2/4. In terms of biological role, catalyzes the isomerization between 2-isopropylmalate and 3-isopropylmalate, via the formation of 2-isopropylmaleate. This chain is 3-isopropylmalate dehydratase small subunit 1 (leuD1), found in Thermotoga maritima (strain ATCC 43589 / DSM 3109 / JCM 10099 / NBRC 100826 / MSB8).